Reading from the N-terminus, the 843-residue chain is Glycogen phosphorylase, brain form (843 aa).

Position 2 is an N-acetylalanine (A2). Residue S15 is modified to Phosphoserine; by PHK; in form phosphorylase A. AMP is bound by residues D43, Y197, and R310. Y197 carries the phosphotyrosine modification. Y473 carries the post-translational modification Phosphotyrosine. K569 serves as a coordination point for pyridoxal 5'-phosphate. The segment at 677–678 is pyridoxal 5'-phosphate; the sequence is TG. K681 bears the N6-(pyridoxal phosphate)lysine mark.

It belongs to the glycogen phosphorylase family. Homodimer. Dimers associate into a tetramer to form the enzymatically active phosphorylase A. Requires pyridoxal 5'-phosphate as cofactor. In terms of processing, phosphorylation of Ser-15 converts phosphorylase B (unphosphorylated) to phosphorylase A.

The catalysed reaction is [(1-&gt;4)-alpha-D-glucosyl](n) + phosphate = [(1-&gt;4)-alpha-D-glucosyl](n-1) + alpha-D-glucose 1-phosphate. Its activity is regulated as follows. Activity of phosphorylase is controlled both by allosteric means (through the non-covalent binding of metabolites) and by covalent modification. Thus AMP allosterically activates, whereas ATP, ADP, and glucose-6-phosphate allosterically inhibit, phosphorylase B. Functionally, glycogen phosphorylase that regulates glycogen mobilization. Phosphorylase is an important allosteric enzyme in carbohydrate metabolism. Enzymes from different sources differ in their regulatory mechanisms and in their natural substrates. However, all known phosphorylases share catalytic and structural properties. In Bos taurus (Bovine), this protein is Glycogen phosphorylase, brain form (PYGB).